We begin with the raw amino-acid sequence, 633 residues long: Lysophospholipase 1 (633 aa).

Residues 1–20 (MKTTTVACAVAGLLFSCVSG) form the signal peptide. In terms of domain architecture, PLA2c spans 47–594 (GCPASRPTIR…QRYCWDGSLN (548 aa)). N-linked (GlcNAc...) asparagine glycosylation is found at N64, N104, N139, N173, N246, N290, N329, N358, N397, N450, N463, N469, N497, N500, N521, N549, N555, and N594. S609 carries the GPI-like-anchor amidated serine lipid modification. Residues 610-633 (AASGIIPSISTVAMAVVFAAWTIF) constitute a propeptide, removed in mature form.

This sequence belongs to the lysophospholipase family. In terms of processing, the GPI-like anchor contains a phosphoceramide lipid group. The anchor position has not been determined.

Its subcellular location is the cell membrane. It catalyses the reaction a 1-acyl-sn-glycero-3-phosphocholine + H2O = sn-glycerol 3-phosphocholine + a fatty acid + H(+). Functionally, catalyzes the release of fatty acids from lysophospholipids. This chain is Lysophospholipase 1 (plb1), found in Aspergillus fumigatus (strain CBS 144.89 / FGSC A1163 / CEA10) (Neosartorya fumigata).